A 280-amino-acid polypeptide reads, in one-letter code: Probable 2-(5''-triphosphoribosyl)-3'-dephosphocoenzyme-A synthase (280 aa).

It belongs to the CitG/MdcB family.

The catalysed reaction is 3'-dephospho-CoA + ATP = 2'-(5''-triphospho-alpha-D-ribosyl)-3'-dephospho-CoA + adenine. In Lactiplantibacillus plantarum (strain ATCC BAA-793 / NCIMB 8826 / WCFS1) (Lactobacillus plantarum), this protein is Probable 2-(5''-triphosphoribosyl)-3'-dephosphocoenzyme-A synthase.